The primary structure comprises 703 residues: Lethal(3)malignant brain tumor-like protein 2 (703 aa).

The tract at residues 1-70 (MEKPRGTEET…AGELPTSPLH (70 aa)) is disordered. S13 carries the phosphoserine modification. Positions 15-25 (PMEEEEDDDLE) are enriched in acidic residues. Residues 35-49 (SYNSSAGSESSSYLE) are compositionally biased toward low complexity. The segment covering 50-60 (ESSEAENEDRE) has biased composition (acidic residues). A Phosphoserine modification is found at S67. The FCS-type zinc finger occupies 81-116 (DGSGSEPAVCEMCGIVGTREAFFSKTKRFCSVSCSR). Residues C90, C93, C110, and C114 each coordinate Zn(2+). MBT repeat units follow at residues 179–283 (FDWG…LVPP), 291–391 (TDWK…IKMS), 397–500 (MSHH…LTPP), and 508–604 (FDWE…LQPP). S338 carries the phosphoserine modification. Residue K405 forms a Glycyl lysine isopeptide (Lys-Gly) (interchain with G-Cter in SUMO2) linkage. 2 disordered regions span residues 604 to 649 (PVSA…KKPL) and 672 to 703 (VKEE…ERDS). The span at 619–634 (TKKKKKQFGKKRKRIP) shows a compositional bias: basic residues. Residues K647 and K673 each participate in a glycyl lysine isopeptide (Lys-Gly) (interchain with G-Cter in SUMO2) cross-link. S681, S685, and S687 each carry phosphoserine. A Glycyl lysine isopeptide (Lys-Gly) (interchain with G-Cter in SUMO1); alternate cross-link involves residue K698. K698 participates in a covalent cross-link: Glycyl lysine isopeptide (Lys-Gly) (interchain with G-Cter in SUMO2); alternate.

Part of the E2F6.com-1 complex in G0 phase composed of E2F6, MGA, MAX, TFDP1, CBX3, BAT8, EUHMTASE1, RING1, RNF2, MBLR, BAT8 and YAF2.

It is found in the nucleus. In terms of biological role, putative Polycomb group (PcG) protein. PcG proteins maintain the transcriptionally repressive state of genes, probably via a modification of chromatin, rendering it heritably changed in its expressibility. Its association with a chromatin-remodeling complex suggests that it may contribute to prevent expression of genes that trigger the cell into mitosis. Binds to monomethylated and dimethylated 'Lys-20' on histone H4. Binds histone H3 peptides that are monomethylated or dimethylated on 'Lys-4', 'Lys-9' or 'Lys-27'. This Rattus norvegicus (Rat) protein is Lethal(3)malignant brain tumor-like protein 2 (L3mbtl2).